Reading from the N-terminus, the 234-residue chain is Sugar fermentation stimulation protein A (234 aa).

Residues 201–220 (LLSEAQNKGVEVLAYKAELS) constitute a DNA-binding region (H-T-H motif).

It belongs to the SfsA family.

Functionally, binds to DNA non-specifically. Could be a regulatory factor involved in maltose metabolism. This is Sugar fermentation stimulation protein A from Salmonella agona (strain SL483).